Consider the following 396-residue polypeptide: Interactor of constitutive active ROPs 5 (396 aa).

2 disordered regions span residues 1–49 (MQTP…TQIP) and 99–122 (ALKR…NASE). 2 coiled-coil regions span residues 67–124 (KKRT…SEDS) and 158–366 (LSSA…TAAS). Basic and acidic residues predominate over residues 99–115 (ALKREAQEEAEDAKHQL).

The protein belongs to the ICR family. Component of the active ARAC10-IRC5-KIN13A complex. Homooligomer. Interacts (via C-terminus) with ARAC4, ARAC10, ARAC11 and (via N-terminus) with KIN13A (via C-terminus), but no interactions with SEC3A. Expressed in xylem cells in the roots and in stamens, petals and pollen.

Its subcellular location is the cell membrane. The protein resides in the cytoplasm. It localises to the cytoskeleton. ROP effector binding specifically activated ROPs and linking them to the microtubule cytoskeleton. Involved in ROP-regulated polar growth. Involved in local disassembly of cortical microtubules when associated with ARAC10 and KIN13A and conversely also mediates the elimination of ARAC10 from the plasma membrane by the cortical microtubules. Accumulates at the plus end of shrinking microtubules. Targets KIN13A to microtubules. The polypeptide is Interactor of constitutive active ROPs 5 (ICR5) (Arabidopsis thaliana (Mouse-ear cress)).